We begin with the raw amino-acid sequence, 495 residues long: Averantin hydroxylase (495 aa).

The chain crosses the membrane as a helical span at residues 12–32; that stretch reads ILLLIVLTVLTPPSLALYRLW. N-linked (GlcNAc...) asparagine glycans are attached at residues asparagine 258 and asparagine 289. Cysteine 436 lines the heme pocket.

This sequence belongs to the cytochrome P450 family. It depends on heme as a cofactor.

The protein resides in the membrane. The enzyme catalyses (1'S)-averantin + reduced [NADPH--hemoprotein reductase] + O2 = (1'S,5'R)-5'-hydroxyaverantin + oxidized [NADPH--hemoprotein reductase] + H2O. The catalysed reaction is (1'S)-averantin + reduced [NADPH--hemoprotein reductase] + O2 = (1'S,5'S)-5'-hydroxyaverantin + oxidized [NADPH--hemoprotein reductase] + H2O + H(+). It functions in the pathway mycotoxin biosynthesis; aflatoxin biosynthesis. Its function is as follows. Averantin hydroxylase; part of the gene cluster that mediates the biosynthesis of aflatoxins, a group of polyketide-derived furanocoumarins, and part of the most toxic and carcinogenic compounds among the known mycotoxins. The four major aflatoxins produced by A.parasiticus are aflatoxin B1 (AFB1), aflatoxin B2 (AFB2), aflatoxin G1 (AFG1) and aflatoxin G2 (AFG2). Within the aflatoxin pathway, the cytochrome P450 monooxygenase aflG catalyzes the hydroxylation of AVN to 5'hydroxyaverantin (HAVN). The biosynthesis of aflatoxins begins with the norsolorinic acid synthase aflC that combines a hexanoyl starter unit produced by the fatty acid synthase aflA/aflB and 7 malonyl-CoA extender units to synthesize the precursor NOR. The second step is the conversion of NOR to averantin and requires the norsolorinic acid ketoreductase aflD, which catalyzes the dehydration of norsolorinic acid to form (1'S)-averantin. The norsolorinic acid reductases aflE and aflF may also play a role in the conversion of NOR to AVN. The cytochrome P450 monooxygenase aflG then catalyzes the hydroxylation of AVN to 5'hydroxyaverantin (HAVN). The next step is performed by the 5'-hydroxyaverantin dehydrogenase aflH that transforms HAVN to 5'-oxoaverantin (OAVN) which is further converted to averufin (AVF) by aflK that plays a dual role in the pathway, as a 5'-oxoaverantin cyclase that mediates conversion of 5'-oxoaverantin, as well as a versicolorin B synthase in a later step in the pathway. The averufin oxidase aflI catalyzes the conversion of AVF to versiconal hemiacetal acetate (VHA). VHA is then the substrate for the versiconal hemiacetal acetate esterase aflJ to yield versiconal (VAL). Versicolorin B synthase aflK then converts VAL to versicolorin B (VERB) by closing the bisfuran ring of aflatoxin which is required for DNA-binding, thus giving to aflatoxin its activity as a mutagen. Then, the activity of the versicolorin B desaturase aflL leads to versicolorin A (VERA). A branch point starts from VERB since it can also be converted to dihydrodemethylsterigmatocystin (DMDHST), probably also by aflL, VERA being a precursor for aflatoxins B1 and G1, and DMDHST for aflatoxins B2 and G2. Next, the versicolorin reductase aflM and the cytochrome P450 monooxygenase aflN are involved in conversion of VERA to demethylsterigmatocystin (DMST). AflX and aflY seem also involved in this step, through probable aflX-mediated epoxide ring-opening step following versicolorin A oxidation and aflY-mediated Baeyer-Villiger oxidation required for the formation of the xanthone ring. The methyltransferase aflO then leads to the modification of DMST to sterigmatocystin (ST), and of DMDHST to dihydrosterigmatocystin (DHST). Both ST and DHST are then substrates of the O-methyltransferase aflP to yield O-methylsterigmatocystin (OMST) and dihydro-O-methylsterigmatocystin (DHOMST), respectively. Finally OMST is converted to aflatoxins B1 and G1, and DHOMST to aflatoxins B2 and G2, via the action of several enzymes including O-methylsterigmatocystin oxidoreductase aflQ, the cytochrome P450 monooxygenase aflU, but also the NADH-dependent flavin oxidoreductase nadA which is specifically required for the synthesis of AFG1. In Aspergillus parasiticus (strain ATCC 56775 / NRRL 5862 / SRRC 143 / SU-1), this protein is Averantin hydroxylase.